The following is a 276-amino-acid chain: Hydroxymethylpyrimidine/phosphomethylpyrimidine kinase (276 aa).

Glutamine 45 is a binding site for 4-amino-5-hydroxymethyl-2-methylpyrimidine.

It belongs to the ThiD family.

It catalyses the reaction 4-amino-5-hydroxymethyl-2-methylpyrimidine + ATP = 4-amino-2-methyl-5-(phosphooxymethyl)pyrimidine + ADP + H(+). The catalysed reaction is 4-amino-2-methyl-5-(phosphooxymethyl)pyrimidine + ATP = 4-amino-2-methyl-5-(diphosphooxymethyl)pyrimidine + ADP. Its pathway is cofactor biosynthesis; thiamine diphosphate biosynthesis; 4-amino-2-methyl-5-diphosphomethylpyrimidine from 5-amino-1-(5-phospho-D-ribosyl)imidazole: step 2/3. The protein operates within cofactor biosynthesis; thiamine diphosphate biosynthesis; 4-amino-2-methyl-5-diphosphomethylpyrimidine from 5-amino-1-(5-phospho-D-ribosyl)imidazole: step 3/3. Functionally, catalyzes the phosphorylation of hydroxymethylpyrimidine phosphate (HMP-P) to HMP-PP, and of HMP to HMP-P. The polypeptide is Hydroxymethylpyrimidine/phosphomethylpyrimidine kinase (thiD) (Staphylococcus aureus (strain MSSA476)).